The sequence spans 1338 residues: Thioester-containing protein 1 allele S3 (1338 aa).

The signal sequence occupies residues 1–21 (MWQFIRSRILTVIIFIGAAHG). N-linked (GlcNAc...) asparagine glycosylation is found at N68, N199, N242, N312, and N481. The interval 580-609 (ENEFDIFHSLGLFARTLDDILFDSANEKTG) is may contain the cleavage site. 4 N-linked (GlcNAc...) asparagine glycosylation sites follow: N637, N728, N813, and N828. A cross-link (isoglutamyl cysteine thioester (Cys-Gln)) is located at residues 859–862 (CGEQ). Cystine bridges form between C1217-C1283, C1326-C1338, and C1329-C1334.

As to quaternary structure, heterodimer of a TEP1-N chain and an TEP1-C chain non-covalently linked. Forms a complex composed of TEP1-N and TEP1-C heterodimer, LRIM1 and APL1C; the interaction stabilizes TEP1-N and TEP1-C heterodimer, prevents its binding to tissues while circulating in the hemolymph and protects the thioester bond from hydrolysis. Mature TEP1 and to a lesser extent full-length TEP1 interact with SPCLIP1; the interaction is induced by microbial infection. In the hemolymph, the full-length protein is cleaved by an unknow protease into a 75kDa N-terminal (TEP1-N) chain and an 80kDa C-terminal (TEP1-C) chain which remain non-covalently linked. The TEP1-C chain contains the thioester bond which covalently binds to the pathogen surface. Cleavage is induced by bacterial infection or aseptic wound injury. During embryonic and pupal development, the cleaved form is the predominant form. In terms of processing, N-glycosylated.

It is found in the secreted. Plays an essential role in the innate immune response against bacteria, fungi and protozoa infection. After proteolytic cleavage, the protein C-terminus binds covalently through a thioester bond to the pathogen surface resulting in pathogen clearance either by melanization or lysis. Initiate the recruitment and activation of a cascade of proteases, mostly of CLIP-domain serine proteases, which leads to the proteolytic cleavage of the prophenoloxidase (PPO) into active phenoloxidase (PO), the rate-limiting enzyme in melanin biosynthesis. In response to parasite P.berghei-mediated infection, binds to and mediates killing of ookinetes, as they egress from midgut epithelial cells into the basal labyrinth, by both lysis and melanization. During bacterial infection, binds to both Gram-positive and Gram-negative bacteria but only promotes phagocytosis of Gram-negative bacteria. Promotes the accumulation of SPCLIP1 onto the surface of P.berghei ookinetes and bacterium E.coli which leads to the melanization of the pathogen. Recruits CLIPA2 to bacteria surface. In response to bacterial infection, required for periostial hemocyte aggregation, but not for the aggregation of sessile hemocytes in non-periostial regions. During the late stage of fungus B.bassiana-mediated infection, required for the initiation of hyphae melanization by binding to the surface of hyphae and recruiting prophenoloxidase PPO to them. Plays a role in male fertility by binding to defective sperm cells and promoting their removal during spermatogenesis. In terms of biological role, binds to and mediates killing of parasite P.bergei ookinetes by lysis. Its function is as follows. Binds covalently through a thioester bond to the pathogen surface resulting in pathogen clearance. The chain is Thioester-containing protein 1 allele S3 from Anopheles gambiae (African malaria mosquito).